The primary structure comprises 258 residues: Tryptophan synthase alpha chain (258 aa).

Active-site proton acceptor residues include Glu-47 and Asp-58.

Belongs to the TrpA family. In terms of assembly, tetramer of two alpha and two beta chains.

The enzyme catalyses (1S,2R)-1-C-(indol-3-yl)glycerol 3-phosphate + L-serine = D-glyceraldehyde 3-phosphate + L-tryptophan + H2O. Its pathway is amino-acid biosynthesis; L-tryptophan biosynthesis; L-tryptophan from chorismate: step 5/5. Its function is as follows. The alpha subunit is responsible for the aldol cleavage of indoleglycerol phosphate to indole and glyceraldehyde 3-phosphate. This Bacillus cereus (strain ATCC 10987 / NRS 248) protein is Tryptophan synthase alpha chain.